Reading from the N-terminus, the 381-residue chain is ELMO domain-containing protein 3 (381 aa).

Residues 1–31 (MNEKSCSFHSKEELRDGQGERLSAGYSPSYD) form a disordered region. Over residues 9 to 19 (HSKEELRDGQG) the composition is skewed to basic and acidic residues. Positions 170 to 324 (VHGRVLQTIY…ELEVLAKKSP (155 aa)) constitute an ELMO domain.

As to expression, both isoform 1 and isoform 6 are widely expressed.

The protein localises to the cell projection. The protein resides in the stereocilium. Its subcellular location is the kinocilium. It localises to the cytoplasm. It is found in the cytoskeleton. In terms of biological role, acts as a GTPase-activating protein (GAP) for ARL2 with low specific activity. The chain is ELMO domain-containing protein 3 (ELMOD3) from Homo sapiens (Human).